A 327-amino-acid chain; its full sequence is DNA-directed RNA polymerase subunit alpha (327 aa).

Residues 1–233 (MQNSASEFLK…DQLSIFADLQ (233 aa)) are alpha N-terminal domain (alpha-NTD). The tract at residues 247 to 327 (VDPILLRPVD…NWPPAGLEKP (81 aa)) is alpha C-terminal domain (alpha-CTD).

This sequence belongs to the RNA polymerase alpha chain family. Homodimer. The RNAP catalytic core consists of 2 alpha, 1 beta, 1 beta' and 1 omega subunit. When a sigma factor is associated with the core the holoenzyme is formed, which can initiate transcription.

The enzyme catalyses RNA(n) + a ribonucleoside 5'-triphosphate = RNA(n+1) + diphosphate. In terms of biological role, DNA-dependent RNA polymerase catalyzes the transcription of DNA into RNA using the four ribonucleoside triphosphates as substrates. The sequence is that of DNA-directed RNA polymerase subunit alpha from Laribacter hongkongensis (strain HLHK9).